We begin with the raw amino-acid sequence, 285 residues long: Seed agglutinin 2 (285 aa).

An N-terminal signal peptide occupies residues 1 to 31 (MASYKFKTQNSFLLLLSISFFFLLLLNKVNS). N-linked (GlcNAc...) asparagine glycosylation is present at asparagine 147. Mn(2+) contacts are provided by glutamate 156 and aspartate 158. 3 residues coordinate Ca(2+): aspartate 158, asparagine 162, and aspartate 166. Residues aspartate 166 and histidine 171 each contribute to the Mn(2+) site.

It belongs to the leguminous lectin family. As to quaternary structure, homotetramer. Mostly found in non-glycosylated form. Expressed in seed.

In terms of biological role, seed lectin. This is Seed agglutinin 2 from Robinia pseudoacacia (Black locust).